The chain runs to 101 residues: Small ribosomal subunit protein uS10 (101 aa).

Belongs to the universal ribosomal protein uS10 family. In terms of assembly, part of the 30S ribosomal subunit.

In terms of biological role, involved in the binding of tRNA to the ribosomes. The chain is Small ribosomal subunit protein uS10 from Ureaplasma parvum serovar 3 (strain ATCC 27815 / 27 / NCTC 11736).